A 189-amino-acid chain; its full sequence is Large ribosomal subunit protein uL5c (189 aa).

It belongs to the universal ribosomal protein uL5 family. As to quaternary structure, part of the 50S ribosomal subunit; contacts the 5S rRNA.

The protein localises to the plastid. It localises to the chloroplast. Functionally, binds 5S rRNA, forms part of the central protuberance of the 50S subunit. The protein is Large ribosomal subunit protein uL5c (rpl5) of Chara vulgaris (Common stonewort).